A 91-amino-acid polypeptide reads, in one-letter code: Cell division protein FtsB (91 aa).

Residues 1–3 are Cytoplasmic-facing; that stretch reads MKW. A helical membrane pass occupies residues 4–21; it reads LVAVLVVFVAMFQYRLWV. At 22-91 the chain is on the periplasmic side; it reads GEGSIADVVR…ETFFMIIDDQ (70 aa). The stretch at 23 to 63 forms a coiled coil; that stretch reads EGSIADVVRLEREIARQEADNERLRERNKQLAAEVDALKTG.

This sequence belongs to the FtsB family. Part of a complex composed of FtsB, FtsL and FtsQ.

It is found in the cell inner membrane. Functionally, essential cell division protein. May link together the upstream cell division proteins, which are predominantly cytoplasmic, with the downstream cell division proteins, which are predominantly periplasmic. This chain is Cell division protein FtsB, found in Teredinibacter turnerae (strain ATCC 39867 / T7901).